The chain runs to 227 residues: Probable GTP-binding protein EngB (227 aa).

Positions 41 to 216 (GRPEVAFAGR…RAEIARFAVP (176 aa)) constitute an EngB-type G domain. GTP-binding positions include 49–56 (GRSNVGKS), 76–80 (GRTKQ), 94–97 (DMPG), 161–164 (TKCD), and 195–197 (TSS). Mg(2+) is bound by residues S56 and T78.

Belongs to the TRAFAC class TrmE-Era-EngA-EngB-Septin-like GTPase superfamily. EngB GTPase family. Mg(2+) is required as a cofactor.

In terms of biological role, necessary for normal cell division and for the maintenance of normal septation. This is Probable GTP-binding protein EngB from Gluconobacter oxydans (strain 621H) (Gluconobacter suboxydans).